A 445-amino-acid polypeptide reads, in one-letter code: tRNA-2-methylthio-N(6)-dimethylallyladenosine synthase (445 aa).

An MTTase N-terminal domain is found at 7 to 121 (KTFYIETFGC…LPEMLVQLEA (115 aa)). Positions 16, 52, 84, 158, 162, and 165 each coordinate [4Fe-4S] cluster. The 231-residue stretch at 144 to 374 (RDNPHRAYLT…QEKQRAIQIR (231 aa)) folds into the Radical SAM core domain. Positions 377-443 (AEMIGSIQEV…PNSLVGESAA (67 aa)) constitute a TRAM domain.

It belongs to the methylthiotransferase family. MiaB subfamily. Monomer. [4Fe-4S] cluster is required as a cofactor.

The protein localises to the cytoplasm. The enzyme catalyses N(6)-dimethylallyladenosine(37) in tRNA + (sulfur carrier)-SH + AH2 + 2 S-adenosyl-L-methionine = 2-methylsulfanyl-N(6)-dimethylallyladenosine(37) in tRNA + (sulfur carrier)-H + 5'-deoxyadenosine + L-methionine + A + S-adenosyl-L-homocysteine + 2 H(+). Functionally, catalyzes the methylthiolation of N6-(dimethylallyl)adenosine (i(6)A), leading to the formation of 2-methylthio-N6-(dimethylallyl)adenosine (ms(2)i(6)A) at position 37 in tRNAs that read codons beginning with uridine. The sequence is that of tRNA-2-methylthio-N(6)-dimethylallyladenosine synthase from Solibacter usitatus (strain Ellin6076).